The primary structure comprises 258 residues: uncharacterized protein (258 aa).

In terms of domain architecture, Cyclin N-terminal spans 16–148; that stretch reads EAFDSFEYAE…VLRALNFDTH (133 aa).

It belongs to the cyclin family. Cyclin L subfamily.

Its subcellular location is the cytoplasm. It localises to the nucleus. This is an uncharacterized protein from Schizosaccharomyces pombe (strain 972 / ATCC 24843) (Fission yeast).